The sequence spans 405 residues: S-adenosylmethionine synthase (405 aa).

141 to 146 (GQGSVD) lines the ATP pocket.

This sequence belongs to the AdoMet synthase 2 family. Requires Mg(2+) as cofactor.

The enzyme catalyses L-methionine + ATP + H2O = S-adenosyl-L-methionine + phosphate + diphosphate. It functions in the pathway amino-acid biosynthesis; S-adenosyl-L-methionine biosynthesis; S-adenosyl-L-methionine from L-methionine: step 1/1. In terms of biological role, catalyzes the formation of S-adenosylmethionine from methionine and ATP. The protein is S-adenosylmethionine synthase of Methanococcus maripaludis (strain C7 / ATCC BAA-1331).